A 459-amino-acid chain; its full sequence is Glutamate--tRNA ligase 2 (459 aa).

The 'HIGH' region motif lies at 8 to 18 (PSPTGYLHIGG). The 'KMSKS' region motif lies at 237 to 241 (KLSKR). K240 contacts ATP.

It belongs to the class-I aminoacyl-tRNA synthetase family. Glutamate--tRNA ligase type 1 subfamily. In terms of assembly, monomer.

The protein resides in the cytoplasm. It carries out the reaction tRNA(Glu) + L-glutamate + ATP = L-glutamyl-tRNA(Glu) + AMP + diphosphate. Functionally, catalyzes the attachment of glutamate to tRNA(Glu) in a two-step reaction: glutamate is first activated by ATP to form Glu-AMP and then transferred to the acceptor end of tRNA(Glu). The sequence is that of Glutamate--tRNA ligase 2 from Campylobacter concisus (strain 13826).